We begin with the raw amino-acid sequence, 234 residues long: GTP cyclohydrolase 1 (234 aa).

Positions methionine 1–arginine 26 are disordered. Residues glycine 11–arginine 26 show a composition bias toward basic and acidic residues. Cysteine 123, histidine 126, and cysteine 194 together coordinate Zn(2+).

It belongs to the GTP cyclohydrolase I family. As to quaternary structure, toroid-shaped homodecamer, composed of two pentamers of five dimers.

It catalyses the reaction GTP + H2O = 7,8-dihydroneopterin 3'-triphosphate + formate + H(+). It participates in cofactor biosynthesis; 7,8-dihydroneopterin triphosphate biosynthesis; 7,8-dihydroneopterin triphosphate from GTP: step 1/1. The protein is GTP cyclohydrolase 1 of Rhodopseudomonas palustris (strain BisB18).